The following is a 464-amino-acid chain: MVQSLAWAGVMTLLMVQWGSAAKLVCYLTNWSQYRTEAVRFFPRDVDPNLCTHVIFAFAGMDNHQLSTVEHNDELLYQELNSLKTKNPKLKTLLAVGGWTFGTQKFTDMVATASNRQTFVKSALSFLRTQGFDGLDLDWEFPGGRGSPTVDKERFTALIQDLAKAFQEEAQSSGKERLLLTAAVPSDRGLVDAGYEVDKIAQSLDFINLMAYDFHSSLEKTTGHNSPLYKRQGESGAAAEQNVDAAVTLWLQKGTPASKLILGMPTYGRSFTLASSSDNGVGAPATGPGAPGPYTKDKGVLAYYEACSWKERHRIEDQKVPYAFQDNQWVSFDDVESFKAKAAYLKQKGLGGAMVWVLDLDDFKGSFCNQGPYPLIRTLRQELNLPSETPRSPEQIIPEPRPSSMPEQGPSPGLDNFCQGKADGVYPNPGDESTYYNCGGGRLFQQSCPPGLVFRASCKCCTWS.

The first 21 residues, 1 to 21 (MVQSLAWAGVMTLLMVQWGSA), serve as a signal peptide directing secretion. In terms of domain architecture, GH18 spans 22-386 (AKLVCYLTNW…RTLRQELNLP (365 aa)). Cys26 and Cys51 are joined by a disulfide. Residues 70–71 (EH) and 97–100 (GGWT) contribute to the chitin site. The active-site Proton donor is the Glu140. Chitin is bound at residue 210-213 (MAYD). The cysteines at positions 307 and 368 are disulfide-linked. The interval 385 to 416 (LPSETPRSPEQIIPEPRPSSMPEQGPSPGLDN) is disordered. The region spanning 415–464 (DNFCQGKADGVYPNPGDESTYYNCGGGRLFQQSCPPGLVFRASCKCCTWS) is the Chitin-binding type-2 domain. Cys448 and Cys461 are oxidised to a cystine.

Belongs to the glycosyl hydrolase 18 family. Chitinase class II subfamily. In terms of assembly, monomer. In terms of tissue distribution, highly expressed in tongue, stomach, kidney, brain, skin, testis, and bone marrow. Low level of expression was found in lung, heart, spleen, small intestine, and liver. Not detectable in pancreas, salivary gland, large intestine, uterus, or peripheral blood mononuclear cells (PBMC).

It localises to the secreted. Its subcellular location is the lysosome. It carries out the reaction Random endo-hydrolysis of N-acetyl-beta-D-glucosaminide (1-&gt;4)-beta-linkages in chitin and chitodextrins.. Its function is as follows. Degrades chitin, chitotriose and chitobiose. May participate in the defense against nematodes and other pathogens. In Mus musculus (Mouse), this protein is Chitotriosidase-1 (Chit1).